The chain runs to 205 residues: Hydrogenase-4 component A (205 aa).

4Fe-4S ferredoxin-type domains are found at residues 2 to 31 (NRFV…TQGL), 41 to 72 (KTST…SQRD), 73 to 102 (DAIQ…ASGS), and 140 to 172 (QTVA…LITG). [4Fe-4S] cluster is bound by residues Cys12, Cys15, Cys18, Cys22, Cys51, Cys54, Cys59, Cys63, Cys82, Cys85, Cys88, Cys92, Cys146, Cys149, Cys158, and Cys162.

[4Fe-4S] cluster is required as a cofactor.

In terms of biological role, probable electron transfer protein for hydrogenase 4. The polypeptide is Hydrogenase-4 component A (Escherichia coli (strain K12)).